Here is an 892-residue protein sequence, read N- to C-terminus: DNA mismatch repair protein MutS (892 aa).

ATP is bound at residue Gly-607–Ser-614.

This sequence belongs to the DNA mismatch repair MutS family.

This protein is involved in the repair of mismatches in DNA. It is possible that it carries out the mismatch recognition step. This protein has a weak ATPase activity. The protein is DNA mismatch repair protein MutS of Bacillus cereus (strain G9842).